The sequence spans 336 residues: Small ribosomal subunit protein uS2 (336 aa).

The protein belongs to the universal ribosomal protein uS2 family.

The sequence is that of Small ribosomal subunit protein uS2 from Beijerinckia indica subsp. indica (strain ATCC 9039 / DSM 1715 / NCIMB 8712).